Reading from the N-terminus, the 345-residue chain is 4-hydroxy-2-oxovalerate aldolase (345 aa).

One can recognise a Pyruvate carboxyltransferase domain in the interval 8-260; the sequence is ITVHDMTLRD…ETGVDVFKIQ (253 aa). 16–17 is a substrate binding site; it reads RD. D17 lines the Mn(2+) pocket. The active-site Proton acceptor is the H20. Substrate is bound by residues S170 and H199. Mn(2+)-binding residues include H199 and H201. Residue Y290 participates in substrate binding.

This sequence belongs to the 4-hydroxy-2-oxovalerate aldolase family.

It catalyses the reaction (S)-4-hydroxy-2-oxopentanoate = acetaldehyde + pyruvate. The protein is 4-hydroxy-2-oxovalerate aldolase of Leptothrix cholodnii (strain ATCC 51168 / LMG 8142 / SP-6) (Leptothrix discophora (strain SP-6)).